The following is an 80-amino-acid chain: Metallothionein-like protein BIF98 (80 aa).

The protein belongs to the metallothionein superfamily. Type 15 family.

Its function is as follows. Metallothioneins have a high content of cysteine residues that bind various heavy metals. The sequence is that of Metallothionein-like protein BIF98 from Brassica rapa subsp. pekinensis (Chinese cabbage).